The chain runs to 1153 residues: Error-prone DNA polymerase (1153 aa).

The tract at residues 1107–1153 (DELIAPSASTEREAPLNDDRRDHPDLPAQQIRHPRNVRILPPSRDFH) is disordered. The span at 1116 to 1131 (TEREAPLNDDRRDHPD) shows a compositional bias: basic and acidic residues.

The protein belongs to the DNA polymerase type-C family. DnaE2 subfamily.

Its subcellular location is the cytoplasm. The enzyme catalyses DNA(n) + a 2'-deoxyribonucleoside 5'-triphosphate = DNA(n+1) + diphosphate. Its function is as follows. DNA polymerase involved in damage-induced mutagenesis and translesion synthesis (TLS). It is not the major replicative DNA polymerase. This Rhodopseudomonas palustris (strain BisA53) protein is Error-prone DNA polymerase.